The chain runs to 342 residues: Ferrochelatase (342 aa).

Histidine 188 and glutamate 268 together coordinate Fe cation.

It belongs to the ferrochelatase family.

The protein localises to the cytoplasm. The catalysed reaction is heme b + 2 H(+) = protoporphyrin IX + Fe(2+). It participates in porphyrin-containing compound metabolism; protoheme biosynthesis; protoheme from protoporphyrin-IX: step 1/1. Functionally, catalyzes the ferrous insertion into protoporphyrin IX. The chain is Ferrochelatase from Rickettsia conorii (strain ATCC VR-613 / Malish 7).